A 108-amino-acid polypeptide reads, in one-letter code: Peptidyl-prolyl cis-trans isomerase FKBP1A (108 aa).

The PPIase FKBP-type domain maps to 20–108; sequence GQTCVVHYTG…IFDVELLKLE (89 aa). K53 bears the N6-acetyllysine; alternate mark. K53 is modified (N6-succinyllysine; alternate).

It belongs to the FKBP-type PPIase family. FKBP1 subfamily. In terms of assembly, interacts with TGFBR1; prevents TGFBR1 phosphorylation by TGFBR2 and stabilizes it in the inactive conformation. Interacts with ACVR1B and SMAD7. Identified in a complex composed of RYR1, PDE4D, PKA, FKBP1A and protein phosphatase 1 (PP1). Interacts directly with RYR2 and RYR3. Interacts with GLMN; rapamycin and FK506 abolish the interaction with GLMN in a dose dependent manner. Interacts directly with RYR1.

The protein localises to the cytoplasm. It localises to the cytosol. The protein resides in the sarcoplasmic reticulum membrane. It carries out the reaction [protein]-peptidylproline (omega=180) = [protein]-peptidylproline (omega=0). Its activity is regulated as follows. Inhibited by both FK506 and rapamycin. Functionally, keeps in an inactive conformation TGFBR1, the TGF-beta type I serine/threonine kinase receptor, preventing TGF-beta receptor activation in absence of ligand. May modulate the RYR1 calcium channel activity. PPIases accelerate the folding of proteins. It catalyzes the cis-trans isomerization of proline imidic peptide bonds in oligopeptides. The chain is Peptidyl-prolyl cis-trans isomerase FKBP1A (FKBP1A) from Bos taurus (Bovine).